Here is a 201-residue protein sequence, read N- to C-terminus: FMN-dependent NADH:quinone oxidoreductase (201 aa).

FMN contacts are provided by residues Ser-10, 16–18, 96–99, and 140–143; these read SQS, MYNF, and SRGG.

The protein belongs to the azoreductase type 1 family. As to quaternary structure, homodimer. FMN serves as cofactor.

The catalysed reaction is 2 a quinone + NADH + H(+) = 2 a 1,4-benzosemiquinone + NAD(+). The enzyme catalyses N,N-dimethyl-1,4-phenylenediamine + anthranilate + 2 NAD(+) = 2-(4-dimethylaminophenyl)diazenylbenzoate + 2 NADH + 2 H(+). Functionally, quinone reductase that provides resistance to thiol-specific stress caused by electrophilic quinones. In terms of biological role, also exhibits azoreductase activity. Catalyzes the reductive cleavage of the azo bond in aromatic azo compounds to the corresponding amines. This is FMN-dependent NADH:quinone oxidoreductase from Shigella boydii serotype 4 (strain Sb227).